Consider the following 4246-residue polypeptide: Intermembrane lipid transfer protein vps13F (4246 aa).

Residues 2-113 (FESIVSNLLT…LLLQKKLKKL (112 aa)) enclose the Chorein N-terminal domain. 16 disordered regions span residues 141 to 271 (IKEK…EDED), 401 to 420 (PKKSSPSTTTTTPPISPPPK), 591 to 759 (KAED…SILG), 914 to 944 (VSSSPSPVSSPSRDKRLEEETKQEDEKEKKL), 964 to 1014 (KKSK…TNDE), 1217 to 1251 (QAQQQAQQQQQSQHPSSNDDNSSSNGGCSVDIKSP), 1356 to 1379 (ISTHFSSKKNAEDENNNSNLDRVD), 1395 to 1436 (YNGV…KSKK), 1622 to 1683 (REKR…KSQS), 2101 to 2131 (LESLHDHKSSSSSSSSSPPPPPPPSSSQQQQ), 2211 to 2237 (HHSKEKNQQSADGSGLSPPLSKDEKEK), 2471 to 2513 (QQQH…KSKQ), 2704 to 2756 (LSTS…QTTK), 3421 to 3449 (IDDDQDSDSDSGSSNSSSPSISSSSTSPL), 3611 to 3652 (KTLN…NNQN), and 3794 to 3813 (NNNNNQNNNNQNNDFNNIDE). The segment covering 168–201 (NASPVNSNNNNNNNSNLVSESNIPSSSSSSSSSL) has biased composition (low complexity). Residues 207-217 (NSSKDANKSDD) are compositionally biased toward basic and acidic residues. Acidic residues predominate over residues 218-271 (TDMDVDDDDEFQEATEGDYDNEEEQDDHDEEDDLSDDDDDDDDEEDDYEMEDED). Composition is skewed to low complexity over residues 401 to 413 (PKKSSPSTTTTTP) and 597 to 658 (QQQQ…SNST). The segment covering 659–668 (DSKDIMKSSG) has biased composition (basic and acidic residues). The span at 669–680 (DKNVNNNNNMGD) shows a compositional bias: low complexity. Residues 681 to 702 (NENKDNIDKKEENKNDDQDNKN) are compositionally biased toward basic and acidic residues. 2 stretches are compositionally biased toward low complexity: residues 725–747 (SGGWFKWFGWGSSNKSKQQQQQQ) and 914–924 (VSSSPSPVSSP). Basic and acidic residues-rich tracts occupy residues 925 to 944 (SRDKRLEEETKQEDEKEKKL) and 987 to 1001 (DKYSTKGTTESREES). A compositionally biased stretch (low complexity) spans 1217 to 1241 (QAQQQAQQQQQSQHPSSNDDNSSSN). Positions 1400 to 1409 (SDDDNNDDEN) are enriched in acidic residues. 2 stretches are compositionally biased toward basic and acidic residues: residues 1410-1431 (DKTTQDDQDDKEKSSGNDDSLK) and 1622-1634 (REKRKRLEKDKDN). The segment covering 1644 to 1670 (QQSIPQKQQQQQQQQQQQQQQQQQQQQ) has biased composition (low complexity). 5 stretches are compositionally biased toward low complexity: residues 2471-2506 (QQQHQQQNNNSNNNNNNNNNNNNNNNNNNNNNNNNN), 2705-2755 (STST…TQTT), 3430-3449 (DSGSSNSSSPSISSSSTSPL), 3613-3652 (LNNNNNNNNNNNNNNLNSVTKDNNNNNNQNNNNQNNNNQN), and 3794-3809 (NNNNNQNNNNQNNDFN).

Belongs to the VPS13 family.

Its subcellular location is the membrane. Its function is as follows. Mediates the transfer of lipids between membranes at organelle contact sites. This chain is Intermembrane lipid transfer protein vps13F (vps13F), found in Dictyostelium discoideum (Social amoeba).